Consider the following 431-residue polypeptide: F-box/kelch-repeat protein At4g19930 (431 aa).

The F-box domain occupies histidine 37 to leucine 83. 2 Kelch repeats span residues leucine 143–lysine 189 and tryptophan 227–valine 275.

This Arabidopsis thaliana (Mouse-ear cress) protein is F-box/kelch-repeat protein At4g19930.